A 387-amino-acid chain; its full sequence is Phosphoglycerate kinase (387 aa).

Substrate contacts are provided by residues 21-23 (DLN), Arg36, 59-62 (HLGR), Arg113, and Arg146. ATP is bound by residues Lys197, Glu314, and 340-343 (GGDT).

The protein belongs to the phosphoglycerate kinase family. In terms of assembly, monomer.

The protein resides in the cytoplasm. The catalysed reaction is (2R)-3-phosphoglycerate + ATP = (2R)-3-phospho-glyceroyl phosphate + ADP. It functions in the pathway carbohydrate degradation; glycolysis; pyruvate from D-glyceraldehyde 3-phosphate: step 2/5. In Yersinia enterocolitica serotype O:8 / biotype 1B (strain NCTC 13174 / 8081), this protein is Phosphoglycerate kinase.